A 312-amino-acid polypeptide reads, in one-letter code: R2-like ligand binding oxidase (312 aa).

Residues Glu-68, Glu-101, and His-104 each coordinate Mn(2+). Positions 71–162 form a cross-link, 3-(O4'-tyrosyl)-valine (Val-Tyr); the sequence is VTQDIQPFMA…AAQVRASVTY (92 aa). Residue Glu-101 participates in Fe cation binding. Positions 167, 202, and 205 each coordinate Fe cation.

It belongs to the ribonucleoside diphosphate reductase small chain family. R2-like ligand binding oxidase subfamily. In terms of assembly, homodimer. It depends on Fe cation as a cofactor. Requires Mn(2+) as cofactor.

Functionally, probable oxidase that might be involved in lipid metabolism. The protein is R2-like ligand binding oxidase of Mycolicibacterium vanbaalenii (strain DSM 7251 / JCM 13017 / BCRC 16820 / KCTC 9966 / NRRL B-24157 / PYR-1) (Mycobacterium vanbaalenii).